The primary structure comprises 178 residues: Membrane-spanning protein YciB (178 aa).

5 consecutive transmembrane segments (helical) span residues 22 to 42, 52 to 72, 76 to 96, 121 to 141, and 151 to 171; these read IFIA…ITSI, LINL…HNSS, WKVT…YLFI, LFWS…ILYF, and IFGL…YIYF.

Belongs to the YciB family.

It localises to the cell membrane. Functionally, plays a role in cell envelope biogenesis, maintenance of cell envelope integrity and membrane homeostasis. This Buchnera aphidicola subsp. Baizongia pistaciae (strain Bp) protein is Membrane-spanning protein YciB.